The sequence spans 686 residues: Translation initiation factor IF-2 (686 aa).

Positions 54 to 105 are disordered; sequence KPSVADEFEVEEKVVRSKKNSNKKKKKGKGNEDKRQENFAGRQQTQTVETPD. Residues 69–81 are compositionally biased toward basic residues; it reads RSKKNSNKKKKKG. The tr-type G domain occupies 188 to 357; the sequence is ERPAVVTIMG…LLVSEVEEYK (170 aa). Residues 197 to 204 are G1; sequence GHVDHGKT. 197–204 is a binding site for GTP; that stretch reads GHVDHGKT. Positions 222 to 226 are G2; it reads GITQH. The tract at residues 243 to 246 is G3; sequence DTPG. Residues 243 to 247 and 297 to 300 contribute to the GTP site; these read DTPGH and NKMD. A G4 region spans residues 297-300; the sequence is NKMD. Residues 333–335 are G5; sequence SAI.

The protein belongs to the TRAFAC class translation factor GTPase superfamily. Classic translation factor GTPase family. IF-2 subfamily.

The protein resides in the cytoplasm. Functionally, one of the essential components for the initiation of protein synthesis. Protects formylmethionyl-tRNA from spontaneous hydrolysis and promotes its binding to the 30S ribosomal subunits. Also involved in the hydrolysis of GTP during the formation of the 70S ribosomal complex. This chain is Translation initiation factor IF-2, found in Bacillus cereus (strain 03BB102).